Consider the following 239-residue polypeptide: tRNA (guanine-N(7)-)-methyltransferase (239 aa).

The S-adenosyl-L-methionine site is built by E69, E94, D121, and D144. D144 is an active-site residue. Substrate is bound at residue K148. Positions 150–155 (RHNKRR) are interaction with RNA. Residues D180 and 217-220 (TKFE) each bind substrate.

It belongs to the class I-like SAM-binding methyltransferase superfamily. TrmB family. In terms of assembly, monomer.

The catalysed reaction is guanosine(46) in tRNA + S-adenosyl-L-methionine = N(7)-methylguanosine(46) in tRNA + S-adenosyl-L-homocysteine. Its pathway is tRNA modification; N(7)-methylguanine-tRNA biosynthesis. Functionally, catalyzes the formation of N(7)-methylguanine at position 46 (m7G46) in tRNA. This is tRNA (guanine-N(7)-)-methyltransferase from Salmonella choleraesuis (strain SC-B67).